We begin with the raw amino-acid sequence, 241 residues long: ATP synthase subunit a (241 aa).

5 helical membrane-spanning segments follow: residues 30 to 50, 91 to 111, 128 to 148, 193 to 213, and 214 to 234; these read GQVFMTSWIVIGAILALVVVG, FIGTLFLFIFVSNWGGSLVPW, INTTVALALLVSLSYFYAGLS, LVVAVLVFLVPLFLPVPVMFL, and GLFTSAIQALIFATLAAYYIG.

It belongs to the ATPase A chain family. As to quaternary structure, F-type ATPases have 2 components, CF(1) - the catalytic core - and CF(0) - the membrane proton channel. CF(1) has five subunits: alpha(3), beta(3), gamma(1), delta(1), epsilon(1). CF(0) has four main subunits: a, b, b' and c.

It is found in the cellular thylakoid membrane. Its function is as follows. Key component of the proton channel; it plays a direct role in the translocation of protons across the membrane. This chain is ATP synthase subunit a, found in Prochlorococcus marinus (strain MIT 9313).